The sequence spans 126 residues: 5-carboxymethyl-2-hydroxymuconate Delta-isomerase (126 aa).

The active-site Proton acceptor; via imino nitrogen is Pro2.

In terms of assembly, homotrimer.

The catalysed reaction is (2E,4Z)-5-hydroxypenta-2,4-diene-1,2,5-tricarboxylate = (3E,5R)-5-carboxy-2-oxohept-3-enedioate. The protein operates within aromatic compound metabolism; 4-hydroxyphenylacetate degradation; pyruvate and succinate semialdehyde from 4-hydroxyphenylacetate: step 4/7. Its function is as follows. Transforms 5-carboxymethyl-2-hydroxy-muconic acid (CHM) into 5-oxo-pent-3-ene-1,2,5-tricarboxylic acid (OPET). The sequence is that of 5-carboxymethyl-2-hydroxymuconate Delta-isomerase (hpcD) from Escherichia coli.